The sequence spans 360 residues: Histidinol-phosphate aminotransferase 2 (360 aa).

Residue Lys218 is modified to N6-(pyridoxal phosphate)lysine.

This sequence belongs to the class-II pyridoxal-phosphate-dependent aminotransferase family. Histidinol-phosphate aminotransferase subfamily. As to quaternary structure, homodimer. Pyridoxal 5'-phosphate serves as cofactor.

The catalysed reaction is L-histidinol phosphate + 2-oxoglutarate = 3-(imidazol-4-yl)-2-oxopropyl phosphate + L-glutamate. It functions in the pathway amino-acid biosynthesis; L-histidine biosynthesis; L-histidine from 5-phospho-alpha-D-ribose 1-diphosphate: step 7/9. In Nitrosococcus oceani (strain ATCC 19707 / BCRC 17464 / JCM 30415 / NCIMB 11848 / C-107), this protein is Histidinol-phosphate aminotransferase 2.